The sequence spans 279 residues: Aspartate/glutamate leucyltransferase (279 aa).

Positions 245–279 (ARERGARPPRGPGALKDACDLPLSDAQPADIEDLD) are disordered.

This sequence belongs to the R-transferase family. Bpt subfamily.

It is found in the cytoplasm. It carries out the reaction N-terminal L-glutamyl-[protein] + L-leucyl-tRNA(Leu) = N-terminal L-leucyl-L-glutamyl-[protein] + tRNA(Leu) + H(+). The catalysed reaction is N-terminal L-aspartyl-[protein] + L-leucyl-tRNA(Leu) = N-terminal L-leucyl-L-aspartyl-[protein] + tRNA(Leu) + H(+). Functions in the N-end rule pathway of protein degradation where it conjugates Leu from its aminoacyl-tRNA to the N-termini of proteins containing an N-terminal aspartate or glutamate. The sequence is that of Aspartate/glutamate leucyltransferase from Caulobacter vibrioides (strain ATCC 19089 / CIP 103742 / CB 15) (Caulobacter crescentus).